The chain runs to 578 residues: Maltogenic alpha-amylase (578 aa).

Belongs to the glycosyl hydrolase 13 family.

It carries out the reaction hydrolysis of (1-&gt;4)-alpha-D-glucosidic linkages in polysaccharides so as to remove successive alpha-maltose residues from the non-reducing ends of the chains.. Functionally, converts starch into maltose. In contrary to other maltogenic alpha-amylases BlmA cannot hydrolyze 1,4-alpha-glucosidic linkage next to 1,6-alpha-glucosidic linkages. This chain is Maltogenic alpha-amylase (blmA), found in Bacillus licheniformis.